Here is a 488-residue protein sequence, read N- to C-terminus: 3-octaprenyl-4-hydroxybenzoate carboxy-lyase (488 aa).

Asparagine 172 contributes to the Mn(2+) binding site. Residues 175 to 177 (IYR), 189 to 191 (RWL), and 194 to 195 (RG) each bind prenylated FMN. A Mn(2+)-binding site is contributed by glutamate 238. The Proton donor role is filled by aspartate 287.

This sequence belongs to the UbiD family. In terms of assembly, homohexamer. It depends on prenylated FMN as a cofactor. Mn(2+) serves as cofactor.

Its subcellular location is the cell membrane. The enzyme catalyses a 4-hydroxy-3-(all-trans-polyprenyl)benzoate + H(+) = a 2-(all-trans-polyprenyl)phenol + CO2. Its pathway is cofactor biosynthesis; ubiquinone biosynthesis. Its function is as follows. Catalyzes the decarboxylation of 3-octaprenyl-4-hydroxy benzoate to 2-octaprenylphenol, an intermediate step in ubiquinone biosynthesis. This chain is 3-octaprenyl-4-hydroxybenzoate carboxy-lyase, found in Pseudomonas fluorescens (strain ATCC BAA-477 / NRRL B-23932 / Pf-5).